A 204-amino-acid polypeptide reads, in one-letter code: Guanylate kinase (204 aa).

Residues 18–196 (PKLFTISAPA…SYEILKSIFI (179 aa)) enclose the Guanylate kinase-like domain. 25–32 (APAGAGKT) is an ATP binding site.

This sequence belongs to the guanylate kinase family.

It is found in the cytoplasm. It carries out the reaction GMP + ATP = GDP + ADP. Functionally, essential for recycling GMP and indirectly, cGMP. The chain is Guanylate kinase from Chlamydia felis (strain Fe/C-56) (Chlamydophila felis).